Reading from the N-terminus, the 207-residue chain is GILT-like protein 2 (207 aa).

A signal peptide spans 1–19 (MRAAVFVCLLLGWVGVATP). C40 and C43 are disulfide-bonded. Residue N182 is glycosylated (N-linked (GlcNAc...) asparagine).

The protein belongs to the GILT family.

It is found in the secreted. In terms of biological role, probable lysosomal thiol reductase that can reduce protein disulfide bonds. Involved in the immune response to bacterial infection. The protein is GILT-like protein 2 of Drosophila melanogaster (Fruit fly).